A 172-amino-acid polypeptide reads, in one-letter code: Capsid protein (172 aa).

The disordered stretch occupies residues 1 to 26 (MASKWNWSGTKGRRTPRRPYGRPYKS). A compositionally biased stretch (basic residues) spans 11-20 (KGRRTPRRPY).

It belongs to the nanoviridae capsid protein family.

It is found in the virion. This chain is Capsid protein (DNA-S), found in Faba bean necrotic yellows virus (isolate Egyptian EV1-93) (FBNYV).